A 390-amino-acid chain; its full sequence is Sorting nexin C1711.11 (390 aa).

In terms of domain architecture, PX spans 1-123 (MLKCTIKNEQ…QFLENNSWKS (123 aa)). Residues Arg-44, Lys-70, and Arg-89 each coordinate a 1,2-diacyl-sn-glycero-3-phospho-(1D-myo-inositol-3-phosphate).

Belongs to the sorting nexin family.

It is found in the cytoplasm. It localises to the membrane. This Schizosaccharomyces pombe (strain 972 / ATCC 24843) (Fission yeast) protein is Sorting nexin C1711.11.